The chain runs to 116 residues: Tyrosine-protein phosphatase 10 (116 aa).

The 116-residue stretch at 1-116 (WRMVWEQNVS…SPTGYGPIVV (116 aa)) folds into the Tyrosine-protein phosphatase domain. Asp-86 serves as a coordination point for substrate.

The protein belongs to the protein-tyrosine phosphatase family.

It carries out the reaction O-phospho-L-tyrosyl-[protein] + H2O = L-tyrosyl-[protein] + phosphate. The polypeptide is Tyrosine-protein phosphatase 10 (STY-10) (Styela plicata (Wrinkled sea squirt)).